Consider the following 951-residue polypeptide: Valine--tRNA ligase (951 aa).

The short motif at 42–52 (PNVTGSLHMGH) is the 'HIGH' region element. The 'KMSKS' region motif lies at 554 to 558 (KMSKS). Residue Lys-557 participates in ATP binding. Residues 880-944 (AGLINKEDEL…AEAKAKLIEQ (65 aa)) are a coiled coil.

Belongs to the class-I aminoacyl-tRNA synthetase family. ValS type 1 subfamily. Monomer.

The protein localises to the cytoplasm. It carries out the reaction tRNA(Val) + L-valine + ATP = L-valyl-tRNA(Val) + AMP + diphosphate. Its function is as follows. Catalyzes the attachment of valine to tRNA(Val). As ValRS can inadvertently accommodate and process structurally similar amino acids such as threonine, to avoid such errors, it has a 'posttransfer' editing activity that hydrolyzes mischarged Thr-tRNA(Val) in a tRNA-dependent manner. The polypeptide is Valine--tRNA ligase (Shigella boydii serotype 4 (strain Sb227)).